The following is a 1744-amino-acid chain: Myotubularin-related protein 5 (1744 aa).

The uDENN domain maps to 14-150 (DTVAVIVLEE…IRFLTYELVE (137 aa)). Positions 165–304 (ELGFELIPIS…YYNSLHQRLR (140 aa)) constitute a cDENN domain. A dDENN domain is found at 306-412 (VMFTTTSQED…LTRALPRRKH (107 aa)). The region spanning 787-871 (KGNFDPVLAH…LYSMESFKKL (85 aa)) is the GRAM domain. One can recognise a Myotubularin phosphatase domain in the interval 996–1447 (NAHIRYAVID…PQIHMWPFLA (452 aa)). Over residues 1102 to 1116 (TGSMTGSQQTLHSKA) the composition is skewed to polar residues. The disordered stretch occupies residues 1102–1123 (TGSMTGSQQTLHSKASSNEESS). The segment at 1540–1590 (IHELTPFTVGARPVQCCYCTNILTRWSKAVHCKKCRIHVHEGCVNRNITIG) adopts a Phorbol-ester/DAG-type zinc-finger fold. Positions 1643 to 1743 (PPLCTGYLSK…WKECIEQVIR (101 aa)) constitute a PH domain.

This sequence belongs to the protein-tyrosine phosphatase family. Non-receptor class myotubularin subfamily.

In terms of biological role, probably acts as an adapter for other myotubularin-like phosphatases. The protein is Myotubularin-related protein 5 of Caenorhabditis elegans.